Reading from the N-terminus, the 129-residue chain is Large ribosomal subunit protein bL20 (129 aa).

It belongs to the bacterial ribosomal protein bL20 family.

Functionally, binds directly to 23S ribosomal RNA and is necessary for the in vitro assembly process of the 50S ribosomal subunit. It is not involved in the protein synthesizing functions of that subunit. The sequence is that of Large ribosomal subunit protein bL20 from Mycolicibacterium smegmatis (strain ATCC 700084 / mc(2)155) (Mycobacterium smegmatis).